We begin with the raw amino-acid sequence, 360 residues long: Ethanolamine-phosphate cytidylyltransferase (360 aa).

Residues 207–208 (GF), 215–218 (HTEA), Lys243, 291–294 (HGDD), and 321–325 (HTEGL) each bind CTP.

This sequence belongs to the cytidylyltransferase family.

The enzyme catalyses phosphoethanolamine + CTP + H(+) = CDP-ethanolamine + diphosphate. The protein operates within phospholipid metabolism; phosphatidylethanolamine biosynthesis; phosphatidylethanolamine from ethanolamine: step 2/3. In terms of biological role, ethanolamine-phosphate cytidylyltransferase that catalyzes the second step in the synthesis of phosphatidylethanolamine (PE) from ethanolamine via the CDP-ethanolamine pathway. The chain is Ethanolamine-phosphate cytidylyltransferase (pctA) from Dictyostelium discoideum (Social amoeba).